Here is a 215-residue protein sequence, read N- to C-terminus: Adenylate kinase (215 aa).

Residue Gly10–Thr15 coordinates ATP. The interval Ser30–Val59 is NMP. AMP is bound by residues Thr31, Arg36, Leu57–Val59, Gly85–Arg88, and Gln92. The LID stretch occupies residues Gly126–Asp163. Residue Arg127 coordinates ATP. Zn(2+) contacts are provided by Cys130 and Cys133. Ser136 to Phe137 is an ATP binding site. Cys150 and Cys153 together coordinate Zn(2+). AMP is bound by residues Arg160 and Arg171. Gln198 is a binding site for ATP.

The protein belongs to the adenylate kinase family. In terms of assembly, monomer.

It localises to the cytoplasm. It catalyses the reaction AMP + ATP = 2 ADP. Its pathway is purine metabolism; AMP biosynthesis via salvage pathway; AMP from ADP: step 1/1. Catalyzes the reversible transfer of the terminal phosphate group between ATP and AMP. Plays an important role in cellular energy homeostasis and in adenine nucleotide metabolism. The chain is Adenylate kinase from Caldicellulosiruptor bescii (strain ATCC BAA-1888 / DSM 6725 / KCTC 15123 / Z-1320) (Anaerocellum thermophilum).